Reading from the N-terminus, the 123-residue chain is Large ribosomal subunit protein uL29 (123 aa).

The protein belongs to the universal ribosomal protein uL29 family. In terms of assembly, component of the large ribosomal subunit.

The protein localises to the cytoplasm. In terms of biological role, component of the large ribosomal subunit. The ribosome is a large ribonucleoprotein complex responsible for the synthesis of proteins in the cell. The polypeptide is Large ribosomal subunit protein uL29 (rpl35) (Hippocampus comes (Tiger tail seahorse)).